We begin with the raw amino-acid sequence, 212 residues long: Imidazole glycerol phosphate synthase subunit HisH (212 aa).

One can recognise a Glutamine amidotransferase type-1 domain in the interval M1 to K211. The Nucleophile role is filled by C79. Residues H186 and E188 contribute to the active site.

In terms of assembly, heterodimer of HisH and HisF.

Its subcellular location is the cytoplasm. The catalysed reaction is 5-[(5-phospho-1-deoxy-D-ribulos-1-ylimino)methylamino]-1-(5-phospho-beta-D-ribosyl)imidazole-4-carboxamide + L-glutamine = D-erythro-1-(imidazol-4-yl)glycerol 3-phosphate + 5-amino-1-(5-phospho-beta-D-ribosyl)imidazole-4-carboxamide + L-glutamate + H(+). It catalyses the reaction L-glutamine + H2O = L-glutamate + NH4(+). It functions in the pathway amino-acid biosynthesis; L-histidine biosynthesis; L-histidine from 5-phospho-alpha-D-ribose 1-diphosphate: step 5/9. IGPS catalyzes the conversion of PRFAR and glutamine to IGP, AICAR and glutamate. The HisH subunit catalyzes the hydrolysis of glutamine to glutamate and ammonia as part of the synthesis of IGP and AICAR. The resulting ammonia molecule is channeled to the active site of HisF. The chain is Imidazole glycerol phosphate synthase subunit HisH from Bacillus licheniformis (strain ATCC 14580 / DSM 13 / JCM 2505 / CCUG 7422 / NBRC 12200 / NCIMB 9375 / NCTC 10341 / NRRL NRS-1264 / Gibson 46).